A 233-amino-acid chain; its full sequence is Large ribosomal subunit protein uL1 (233 aa).

The protein belongs to the universal ribosomal protein uL1 family. In terms of assembly, part of the 50S ribosomal subunit.

Binds directly to 23S rRNA. The L1 stalk is quite mobile in the ribosome, and is involved in E site tRNA release. In terms of biological role, protein L1 is also a translational repressor protein, it controls the translation of the L11 operon by binding to its mRNA. The chain is Large ribosomal subunit protein uL1 from Vibrio campbellii (strain ATCC BAA-1116).